The chain runs to 495 residues: Glucose-6-phosphate 1-dehydrogenase (495 aa).

NADP(+) contacts are provided by residues 11–18 (GASGDLAK), Arg45, 84–85 (DV), and Lys147. Positions 177, 181, 215, and 234 each coordinate substrate. His239 functions as the Proton acceptor in the catalytic mechanism. Substrate-binding residues include Lys339 and Lys344.

This sequence belongs to the glucose-6-phosphate dehydrogenase family.

The catalysed reaction is D-glucose 6-phosphate + NADP(+) = 6-phospho-D-glucono-1,5-lactone + NADPH + H(+). The protein operates within carbohydrate degradation; pentose phosphate pathway; D-ribulose 5-phosphate from D-glucose 6-phosphate (oxidative stage): step 1/3. Catalyzes the oxidation of glucose 6-phosphate to 6-phosphogluconolactone. The chain is Glucose-6-phosphate 1-dehydrogenase from Streptococcus pneumoniae serotype 4 (strain ATCC BAA-334 / TIGR4).